Here is a 466-residue protein sequence, read N- to C-terminus: MEKSRVAPKSKVDTVANLAKRRGLVYPCGEIYGGTKSAWDYGPLGVELKENIKRQWWRSMVTSREDVVGLDSSVILPRQVWEASGHVATFTDPLVESLITHKRYRADHLLEAYEEKHGHPPANGLADIRDPETGEPGRWTEPRNFSGLLKTFLGPVDDEEGLHYLRPETAQGIFINYKNVETTARKKPPFGIAQIGKSFRNEITPGNFIFRTREFEQMEMEFFVKPGEDEQWHQYWIDTRLAWYTDLGIDPENLRLYEHPKEKLSHYSTRTVDIEYRFRFQGSEWGELEGVANRTDYDLKTHSEHSGTELSYFDQANNERYIPYVIEPAAGLTRSLMAFLVDAYAEDEAPNAKGGVDVRTVLRLDRRLAPVKAAVLPLSRNADLTPKAKDLAAQLRKHWNVEFDDAGAIGRRYRRQDEIGTPFCITVDFDTLEDQAVTIRERDSMAQERIALDKVEGYLAQHLIGV.

Residues Arg105 and Glu168 each contribute to the substrate site. Residues Arg200–Glu202, Phe210–Phe215, Glu287–Leu288, and Gly331–Arg334 contribute to the ATP site. A substrate-binding site is contributed by Phe215–Glu219. Glu327–Gly331 is a binding site for substrate.

This sequence belongs to the class-II aminoacyl-tRNA synthetase family. Homodimer.

Its subcellular location is the cytoplasm. It carries out the reaction tRNA(Gly) + glycine + ATP = glycyl-tRNA(Gly) + AMP + diphosphate. Its function is as follows. Catalyzes the attachment of glycine to tRNA(Gly). This is Glycine--tRNA ligase from Nocardia farcinica (strain IFM 10152).